We begin with the raw amino-acid sequence, 565 residues long: Proline--tRNA ligase (565 aa).

The protein belongs to the class-II aminoacyl-tRNA synthetase family. ProS type 1 subfamily. As to quaternary structure, homodimer.

The protein localises to the cytoplasm. The catalysed reaction is tRNA(Pro) + L-proline + ATP = L-prolyl-tRNA(Pro) + AMP + diphosphate. In terms of biological role, catalyzes the attachment of proline to tRNA(Pro) in a two-step reaction: proline is first activated by ATP to form Pro-AMP and then transferred to the acceptor end of tRNA(Pro). As ProRS can inadvertently accommodate and process non-cognate amino acids such as alanine and cysteine, to avoid such errors it has two additional distinct editing activities against alanine. One activity is designated as 'pretransfer' editing and involves the tRNA(Pro)-independent hydrolysis of activated Ala-AMP. The other activity is designated 'posttransfer' editing and involves deacylation of mischarged Ala-tRNA(Pro). The misacylated Cys-tRNA(Pro) is not edited by ProRS. The protein is Proline--tRNA ligase of Lactobacillus delbrueckii subsp. bulgaricus (strain ATCC 11842 / DSM 20081 / BCRC 10696 / JCM 1002 / NBRC 13953 / NCIMB 11778 / NCTC 12712 / WDCM 00102 / Lb 14).